We begin with the raw amino-acid sequence, 125 residues long: Cu-Zn superoxide dismutase-like protein (125 aa).

Residues Cys-52 and Cys-102 are joined by a disulfide bond.

The protein belongs to the Cu-Zn superoxide dismutase family.

The protein localises to the host cytoplasm. Virion protein with no enzymatic activity. The protein is Cu-Zn superoxide dismutase-like protein of Mus musculus (Mouse).